Here is a 309-residue protein sequence, read N- to C-terminus: Pantoate--beta-alanine ligase (309 aa).

The protein belongs to the pantothenate synthetase family.

The protein localises to the cytoplasm. The protein resides in the nucleus. The enzyme catalyses (R)-pantoate + beta-alanine + ATP = (R)-pantothenate + AMP + diphosphate + H(+). It functions in the pathway cofactor biosynthesis; (R)-pantothenate biosynthesis; (R)-pantothenate from (R)-pantoate and beta-alanine: step 1/1. Functionally, required for pantothenic acid biosynthesis. In Saccharomyces cerevisiae (strain ATCC 204508 / S288c) (Baker's yeast), this protein is Pantoate--beta-alanine ligase (PAN6).